The chain runs to 520 residues: Ubiquitin carboxyl-terminal hydrolase 3 (520 aa).

Met-1 carries the post-translational modification N-acetylmethionine. The UBP-type zinc-finger motif lies at 1 to 121; sequence MECPHLSSSV…QKVREHLQNL (121 aa). 12 residues coordinate Zn(2+): Cys-3, His-5, Cys-29, Cys-32, Cys-41, Cys-44, Cys-49, His-56, His-60, His-82, Cys-95, and Cys-98. The USP domain maps to 159 to 511; the sequence is TGLRNLGNTC…KAYILFYVEH (353 aa). Cys-168 acts as the Nucleophile in catalysis. His-471 serves as the catalytic Proton acceptor.

This sequence belongs to the peptidase C19 family. USP3 subfamily. In terms of assembly, interacts (via UBP-type domain) with H2A; the interaction is less efficient than with monoubiquitinated H2A. In terms of tissue distribution, expressed in all tissues examined, with strongest expression in pancreas.

Its subcellular location is the nucleus. It is found in the cytoplasm. It catalyses the reaction Thiol-dependent hydrolysis of ester, thioester, amide, peptide and isopeptide bonds formed by the C-terminal Gly of ubiquitin (a 76-residue protein attached to proteins as an intracellular targeting signal).. Functionally, deubiquitinase that plays a role in several cellular processes including transcriptional regulation, cell cycle progression or innate immunity. In response to DNA damage, deubiquitinates monoubiquitinated target proteins such as histone H2A and H2AX and thereby counteracts RNF168- and RNF8-mediated ubiquitination. In turn, participates in the recruitment of DNA damage repair factors to DNA break sites. Required for proper progression through S phase and subsequent mitotic entry. Acts as a positive regulator of TP53 by deubiquitinating and stabilizing it to promote normal cell proliferation and transformation. Participates in establishing tolerance innate immune memory through non-transcriptional feedback. Mechanistically, negatively regulates TLR-induced NF-kappa-B signaling by targeting and removing the 'Lys-63'-linked polyubiquitin chains on MYD88. Negatively regulates the activation of type I interferon signaling by mediating 'Lys-63'-linked polyubiquitin chains on RIGI and IFIH1. Also deubiquinates ASC/PYCARD, the central adapter mediating the assembly and activation of most inflammasomes, and thereby promotes inflammasome activation. This is Ubiquitin carboxyl-terminal hydrolase 3 (USP3) from Homo sapiens (Human).